The following is a 238-amino-acid chain: UPF0280 protein Mboo_1274 (238 aa).

This sequence belongs to the UPF0280 family.

This chain is UPF0280 protein Mboo_1274, found in Methanoregula boonei (strain DSM 21154 / JCM 14090 / 6A8).